The primary structure comprises 73 residues: UPF0346 protein SH1485 (73 aa).

Belongs to the UPF0346 family.

This Staphylococcus haemolyticus (strain JCSC1435) protein is UPF0346 protein SH1485.